We begin with the raw amino-acid sequence, 262 residues long: Adenosylcobinamide-GDP ribazoletransferase (262 aa).

7 consecutive transmembrane segments (helical) span residues 37-57, 58-78, 112-132, 139-159, 183-203, 205-225, and 237-257; these read SMPLAGAAIGALAAGTYALCS, MFSFGTPLFLALFLLWLGIWL, VGAFAVLSLACLLSFRWLFLY, IPPALFVAIPLLSRSGAAWLL, AVWALVLAFLALSLLLVFGGV, VWTSAALAVAMALLALGAKPW, and VLGALIEGGETLLWGVVWLLH.

Belongs to the CobS family. The cofactor is Mg(2+).

Its subcellular location is the cell membrane. It catalyses the reaction alpha-ribazole + adenosylcob(III)inamide-GDP = adenosylcob(III)alamin + GMP + H(+). The enzyme catalyses alpha-ribazole 5'-phosphate + adenosylcob(III)inamide-GDP = adenosylcob(III)alamin 5'-phosphate + GMP + H(+). The protein operates within cofactor biosynthesis; adenosylcobalamin biosynthesis; adenosylcobalamin from cob(II)yrinate a,c-diamide: step 7/7. In terms of biological role, joins adenosylcobinamide-GDP and alpha-ribazole to generate adenosylcobalamin (Ado-cobalamin). Also synthesizes adenosylcobalamin 5'-phosphate from adenosylcobinamide-GDP and alpha-ribazole 5'-phosphate. This is Adenosylcobinamide-GDP ribazoletransferase from Geobacillus thermodenitrificans (strain NG80-2).